Here is a 162-residue protein sequence, read N- to C-terminus: uncharacterized protein (162 aa).

A coiled-coil region spans residues 129–161 (DLNAVLKNLKEVEKKSLKISKEELKKKLDQILG).

This is an uncharacterized protein from Aquifex aeolicus (strain VF5).